Reading from the N-terminus, the 199-residue chain is Chaperone protein TorD (199 aa).

The protein belongs to the TorD/DmsD family. TorD subfamily.

Its subcellular location is the cytoplasm. Its function is as follows. Involved in the biogenesis of TorA. Acts on TorA before the insertion of the molybdenum cofactor and, as a result, probably favors a conformation of the apoenzyme that is competent for acquiring the cofactor. This chain is Chaperone protein TorD, found in Escherichia coli O157:H7 (strain EC4115 / EHEC).